We begin with the raw amino-acid sequence, 242 residues long: MDIKLKDFEGPLDLLLHLVSKYQMDIYDVPITEVIEQYLAYVSTLQAMRLEVTGEYMVMASQLMLIKSRKLLPKVAEVTDLGDDLEQDLLSQIEEYRKFKLLGEHLEAKHQERAQYYSKAPTELIYEDAELVHDKTTIDLFLAFSNILAKKKEEFAQNHTTILRDEYKIEDMMIIVKESLIGRDQLRLQDLFKEAQNVQEVITLFLATLELIKTQELILVQEESFGDIYLMEKKEESQVPQS.

This sequence belongs to the ScpA family. In terms of assembly, component of a cohesin-like complex composed of ScpA, ScpB and the Smc homodimer, in which ScpA and ScpB bind to the head domain of Smc. The presence of the three proteins is required for the association of the complex with DNA.

Its subcellular location is the cytoplasm. Participates in chromosomal partition during cell division. May act via the formation of a condensin-like complex containing Smc and ScpB that pull DNA away from mid-cell into both cell halves. This chain is Segregation and condensation protein A, found in Streptococcus pneumoniae serotype 2 (strain D39 / NCTC 7466).